The following is a 458-amino-acid chain: MIFYEIFQVSFYQNFLWEKSVRLLFKVQRRLFKVSYIHDKKNLYELQKLIFQSNCARLLAIREVTQLSFNKKISGVDGKTTLNFLERFELNEYLRKNWNNWKPQSLRKRCVFDLNENLISDTISTISDRSWQVLIKFALEPVHEAFFHPFNFGFRYNVPIYKVQQAILLNLSNISFGSKKRILKVELNCNFSIFNYDYLMKKLIAPRNIKLGIFRLLELGFNLHFPENECQISTFSSLLLNVMLNGVENVHNCVRYGYYMLFFLRPMDNEKILANQILSLLYTRGIKKNSSKFLLVSNTKGFDFLGWHFKFSEKVKNGISAIPSLNNYQFFLNRVKRIVNNSNYGSVVKASKLYPVIKNWREYHKYSDLRSLSYSLFFVKKHAFSAFNSESKQDFYSSKRLLFKSFLVSESFNTVSKKYNFHILNCFSFGHLTFLSESINFFNKINLYFCVHCGMKCI.

This sequence to group II intron maturases.

It is found in the plastid. The protein localises to the chloroplast. In terms of biological role, could be required for group III intron excision. The protein is Maturase-like protein 1 (mat1) of Euglena gracilis.